Consider the following 83-residue polypeptide: uncharacterized protein (83 aa).

It localises to the plastid. The protein resides in the chloroplast. This is an uncharacterized protein from Pinus thunbergii (Japanese black pine).